Reading from the N-terminus, the 301-residue chain is Ribonuclease HIII (301 aa).

Residues 84–301 (ASAIGSDEVG…TEKAARIAKK (218 aa)) enclose the RNase H type-2 domain. Residues Asp90, Glu91, and Asp195 each coordinate a divalent metal cation.

This sequence belongs to the RNase HII family. RnhC subfamily. Mn(2+) serves as cofactor. Mg(2+) is required as a cofactor.

It is found in the cytoplasm. It catalyses the reaction Endonucleolytic cleavage to 5'-phosphomonoester.. In terms of biological role, endonuclease that specifically degrades the RNA of RNA-DNA hybrids. This chain is Ribonuclease HIII, found in Geobacillus sp. (strain WCH70).